A 224-amino-acid polypeptide reads, in one-letter code: Putative endoglucanase X (224 aa).

The tract at residues 147–168 (QTQPTPSPSPTPTDSPLVKKGD) is disordered. In terms of domain architecture, Dockerin spans 162–224 (PLVKKGDVNL…SILKRILLRN (63 aa)).

It carries out the reaction Endohydrolysis of (1-&gt;4)-beta-D-glucosidic linkages in cellulose, lichenin and cereal beta-D-glucans.. In terms of biological role, this enzyme catalyzes the endohydrolysis of 1,4-beta-glucosidic linkages in cellulose, lichenin and cereal beta-D-glucans. In Acetivibrio thermocellus (Hungateiclostridium thermocellum), this protein is Putative endoglucanase X (celX).